Reading from the N-terminus, the 343-residue chain is Probable dual-specificity RNA methyltransferase RlmN (343 aa).

Catalysis depends on Glu-93, which acts as the Proton acceptor. A Radical SAM core domain is found at 99 to 320; it reads TDDRATLCVS…NAKGVVCTIR (222 aa). A disulfide bridge links Cys-106 with Cys-331. [4Fe-4S] cluster contacts are provided by Cys-113, Cys-117, and Cys-120. S-adenosyl-L-methionine-binding positions include 158–159, Ser-190, 212–214, and His-288; these read GE and SLH. The active-site S-methylcysteine intermediate is Cys-331.

This sequence belongs to the radical SAM superfamily. RlmN family. The cofactor is [4Fe-4S] cluster.

It localises to the cytoplasm. It catalyses the reaction adenosine(2503) in 23S rRNA + 2 reduced [2Fe-2S]-[ferredoxin] + 2 S-adenosyl-L-methionine = 2-methyladenosine(2503) in 23S rRNA + 5'-deoxyadenosine + L-methionine + 2 oxidized [2Fe-2S]-[ferredoxin] + S-adenosyl-L-homocysteine. The enzyme catalyses adenosine(37) in tRNA + 2 reduced [2Fe-2S]-[ferredoxin] + 2 S-adenosyl-L-methionine = 2-methyladenosine(37) in tRNA + 5'-deoxyadenosine + L-methionine + 2 oxidized [2Fe-2S]-[ferredoxin] + S-adenosyl-L-homocysteine. Functionally, specifically methylates position 2 of adenine 2503 in 23S rRNA and position 2 of adenine 37 in tRNAs. In Parabacteroides distasonis (strain ATCC 8503 / DSM 20701 / CIP 104284 / JCM 5825 / NCTC 11152), this protein is Probable dual-specificity RNA methyltransferase RlmN.